A 124-amino-acid chain; its full sequence is Nucleoid-associated protein Noca_0318 (124 aa).

The protein belongs to the YbaB/EbfC family. Homodimer.

The protein localises to the cytoplasm. It is found in the nucleoid. Binds to DNA and alters its conformation. May be involved in regulation of gene expression, nucleoid organization and DNA protection. The sequence is that of Nucleoid-associated protein Noca_0318 from Nocardioides sp. (strain ATCC BAA-499 / JS614).